A 240-amino-acid chain; its full sequence is MSIAKGKNALLVASSYYGPFYPDGKNTGVHFSELLIPYNVFKKAGFNVQFVSENGSYKFDDHSIEESKLGDFERKVFNDKNDDFWTNLNNMKKASDIVGKDYQLLFVAGGHAAMFDLPKATNLQAVAREVFTNGGVLSAVCHGPVLLANVKNPQSVEGKTVVYHKHVTAFNKAGEEKMGVMDELKKRGMKSLNEIFAEAGATFIDPPNPNVNFTQIDGKIVTGVNPQSAKSTAEAAVSAL.

Residues C141, H142, and E175 contribute to the active site.

The protein belongs to the peptidase C56 family. HSP31-like subfamily.

The protein resides in the cytoplasm. It is found in the nucleus. It catalyses the reaction methylglyoxal + H2O = (R)-lactate + H(+). In terms of biological role, catalyzes the conversion of methylglyoxal (MG) to D-lactate in a single glutathione (GSH)-independent step. May play a role in detoxifying endogenously produced glyoxals. Involved in protection against reactive oxygen species (ROS). In Schizosaccharomyces pombe (strain 972 / ATCC 24843) (Fission yeast), this protein is Glutathione-independent glyoxalase hsp3102.